The following is a 122-amino-acid chain: Ribosome-binding factor A (122 aa).

This sequence belongs to the RbfA family. Monomer. Binds 30S ribosomal subunits, but not 50S ribosomal subunits or 70S ribosomes.

It is found in the cytoplasm. One of several proteins that assist in the late maturation steps of the functional core of the 30S ribosomal subunit. Associates with free 30S ribosomal subunits (but not with 30S subunits that are part of 70S ribosomes or polysomes). Required for efficient processing of 16S rRNA. May interact with the 5'-terminal helix region of 16S rRNA. The sequence is that of Ribosome-binding factor A from Polaromonas naphthalenivorans (strain CJ2).